A 101-amino-acid chain; its full sequence is RNA-3 uncharacterized 11.6 kDa protein (101 aa).

This is RNA-3 uncharacterized 11.6 kDa protein from Beet necrotic yellow vein mosaic virus (isolate Yugoslavia/G1) (BNYVV).